The primary structure comprises 1557 residues: MKSTSFITLLLLSYFIVEAHSSIFHWDDERLFKHDDTHSWLTDVQKAELETLKHQPIQLRDKTLEFYNQLPTNEKAIWDKFYTKYCVVWLKEVASDEEIGKLKELESEKNKEALLTSIYSFKDRLDEVDQRKVELWKETCDEYVTKGLSRKRRDSNKNFEEFIYWMTDEQKQSMNDMKTAGKSFNEIHKEGRKYFKALTIDKQSSLKEQFKDKCKKYFMQIANSDEVEKIKSLNDDEIRHVVKNAVARLNGEDKEFAVKMETLCEDVLAFKARKNDIDDKINRRLSWMTDEQKQVVKQLYADGRSQADIRAKIFEFLSSIDGPAGVAAKAQIQKECYKWMEEVATAEEIAALHELHEIDHDGCRRKVREFIGRLPEDRKLEVEKDLPFCEKIWYRDHGDHNSHKHGAHHHHRHLAVRRRRHLYAIEKFLDWLKPEQKHELEKIENSGAHFDDVIAEVKKFYGLLPEEKKIELKAKFKSQCYDWVKEVATSEEMNDIMKMHESKNHSDLMKRLTELENRLTEDQKHTIEHVREVCLGLWEVQNTNKQHKQSLEEAMDAYLSWMTDEDKEKVKAIYETSNRQTFYDEILKIMESSEDEVKAKATEKLEAACKHYGTNILGEENVDIIREMKKNGATFEEISNRVDELIEGITDSDRKEKAYRMSKLCKKIYSLGHSKQLQQYDFENVLQKYLTWLDDSQKNELRTMSDNKEKIYKKIIDYFDGTIGEVKEKAVEELQLACNHYIKSIVGEEKAMEIKQLKEEGKSSEEIAKKVEDVINQISDESIRSRADEALLVCKRIFGIVKRLRRDNSEIHSLEEAMERYLTWLSDDQKIVIKSIYDVNDRKVLYEKIMEFFDDAIGETKQKAAKELKDACKHYVKDLIGEENGNLLREMKENGASNEAIATKVEEMIEAITDETKRAQAMRASTSCRKVYGVVQRFRRDHHHEHNLDEALEKHFTWLNEEQKSQLKTIYESEDREALHKKVWEFFEAGAGLRASNASKKIYGVAKRFRRDHHHEHNLDEALEKYLTWLNEEQKSQMKTIYESGDREALYKKVLEFFEAATGEVKEKAAVELKSACRHYIKDYIGDEKAEKIKEMKESGVSTEEISKKVDEFIAMITDDEKKAKALRASSACKKIYGVAKRFRRDHHHEHNLEEALEKYLTWLNEEQKSQMKTIYESGDREALYKKVLEFFEAATGEVKEKAAVELKSACRHYIKDYIGDEKAEKIKEMKESGVSTEEISKKVDEFIAMITDDEKKAKALRASNACKKIYGVAKRLRRDHHHEHNLEEAMGKYLSWMSDEQQAQVKKIYGTGDRLATYNKVMELFESVPSDEKEKATSQLKAACRHYIKDFIGKDNLAVIKEMKESGATNEAIGEKIDEFIAGLDDEQKKAQAQRAASACKKIYGVKSRKRREHYEIDVDEAISKYLTWLNEEQKAEIKQLKEKDEKQTIGKKIMEFFELTSGDDKEKAREQLKAACKHYVKMYVGEEKAAELKKLKDSGISLEEMSKKVTETIETIEDEAVRAKARRIHSYCQRIFGITKARRHLAMKHHRFYDD.

Positions M1–S21 are cleaved as a signal peptide. A propeptide spanning residues S22 to R60 is cleaved from the precursor. Residue N997 is glycosylated (N-linked (GlcNAc...) asparagine).

It belongs to the NPA family. Post-translationally, nematode polyprotein allergens (NPAs) are synthesized as large polypeptides that are subsequently proteolytically cleaved to active polypeptide units.

Has high binding affinity for fatty acids and retinoids. This chain is DVA-1 polyprotein (DVA-1), found in Dictyocaulus viviparus (Bovine lungworm).